A 186-amino-acid polypeptide reads, in one-letter code: Tumor necrosis factor alpha-induced protein 8-like protein 1 (186 aa).

Residues Glu37 to Leu70 adopt a coiled-coil conformation.

It belongs to the TNFAIP8 family.

Its subcellular location is the cytoplasm. This Danio rerio (Zebrafish) protein is Tumor necrosis factor alpha-induced protein 8-like protein 1 (tnfaip8l1).